The following is a 266-amino-acid chain: Indole-3-glycerol phosphate synthase (266 aa).

Belongs to the TrpC family.

It catalyses the reaction 1-(2-carboxyphenylamino)-1-deoxy-D-ribulose 5-phosphate + H(+) = (1S,2R)-1-C-(indol-3-yl)glycerol 3-phosphate + CO2 + H2O. It functions in the pathway amino-acid biosynthesis; L-tryptophan biosynthesis; L-tryptophan from chorismate: step 4/5. The protein is Indole-3-glycerol phosphate synthase of Paracidovorax citrulli (strain AAC00-1) (Acidovorax citrulli).